Here is a 156-residue protein sequence, read N- to C-terminus: Small ribosomal subunit protein uS7 (156 aa).

This sequence belongs to the universal ribosomal protein uS7 family. As to quaternary structure, part of the 30S ribosomal subunit. Contacts proteins S9 and S11.

Functionally, one of the primary rRNA binding proteins, it binds directly to 16S rRNA where it nucleates assembly of the head domain of the 30S subunit. Is located at the subunit interface close to the decoding center, probably blocks exit of the E-site tRNA. The polypeptide is Small ribosomal subunit protein uS7 (Aeromonas hydrophila subsp. hydrophila (strain ATCC 7966 / DSM 30187 / BCRC 13018 / CCUG 14551 / JCM 1027 / KCTC 2358 / NCIMB 9240 / NCTC 8049)).